The following is a 113-amino-acid chain: Hydrogenase maturation factor HypA (113 aa).

Histidine 2 is a binding site for Ni(2+). Zn(2+) contacts are provided by cysteine 73, cysteine 76, cysteine 89, and cysteine 92.

This sequence belongs to the HypA/HybF family.

Its function is as follows. Involved in the maturation of [NiFe] hydrogenases. Required for nickel insertion into the metal center of the hydrogenase. The sequence is that of Hydrogenase maturation factor HypA from Xanthobacter autotrophicus (strain ATCC BAA-1158 / Py2).